Reading from the N-terminus, the 400-residue chain is NADH dehydrogenase-like protein MT1860 (400 aa).

Belongs to the NADH dehydrogenase family. Requires FAD as cofactor.

The chain is NADH dehydrogenase-like protein MT1860 from Mycobacterium tuberculosis (strain CDC 1551 / Oshkosh).